Reading from the N-terminus, the 165-residue chain is 6,7-dimethyl-8-ribityllumazine synthase (165 aa).

5-amino-6-(D-ribitylamino)uracil-binding positions include Phe22, 56-58 (SME), and 80-82 (AVI). 85 to 86 (ET) serves as a coordination point for (2S)-2-hydroxy-3-oxobutyl phosphate. Catalysis depends on His88, which acts as the Proton donor. Residue Phe113 participates in 5-amino-6-(D-ribitylamino)uracil binding. Residue Arg127 coordinates (2S)-2-hydroxy-3-oxobutyl phosphate.

This sequence belongs to the DMRL synthase family.

The catalysed reaction is (2S)-2-hydroxy-3-oxobutyl phosphate + 5-amino-6-(D-ribitylamino)uracil = 6,7-dimethyl-8-(1-D-ribityl)lumazine + phosphate + 2 H2O + H(+). Its pathway is cofactor biosynthesis; riboflavin biosynthesis; riboflavin from 2-hydroxy-3-oxobutyl phosphate and 5-amino-6-(D-ribitylamino)uracil: step 1/2. Functionally, catalyzes the formation of 6,7-dimethyl-8-ribityllumazine by condensation of 5-amino-6-(D-ribitylamino)uracil with 3,4-dihydroxy-2-butanone 4-phosphate. This is the penultimate step in the biosynthesis of riboflavin. The polypeptide is 6,7-dimethyl-8-ribityllumazine synthase (Thermotoga petrophila (strain ATCC BAA-488 / DSM 13995 / JCM 10881 / RKU-1)).